The following is a 372-amino-acid chain: N-acetylneuraminate epimerase 1 (372 aa).

The signal sequence occupies residues 1-25 (MITMKVKNFIYLPFCLFIGTSVAGA). 7 Kelch repeats span residues 44 to 88 (KIYI…TIID), 90 to 141 (KIYV…FIHN), 143 to 177 (HAVS…KVNR), 178 to 223 (DYFS…IFAE), 226 to 269 (IYIL…VSGA), 291 to 340 (EKYS…PWQG), and 342 to 371 (MLIL…IKIV). Glu232 acts as the Proton acceptor in catalysis.

Belongs to the NanM family. As to quaternary structure, homodimer.

It is found in the periplasm. The enzyme catalyses N-acetyl-alpha-neuraminate = N-acetyl-beta-neuraminate. Functionally, converts alpha-N-acetylneuranimic acid (Neu5Ac) to the beta-anomer, accelerating the equilibrium between the alpha- and beta-anomers. Probably facilitates sialidase-negative bacteria to compete successfully for limited amounts of extracellular Neu5Ac, which is likely taken up in the beta-anomer. In addition, the rapid removal of sialic acid from solution might be advantageous to the bacterium to damp down host responses. The sequence is that of N-acetylneuraminate epimerase 1 from Escherichia coli O6:H1 (strain CFT073 / ATCC 700928 / UPEC).